A 256-amino-acid chain; its full sequence is MKIITCYKCVPDEQDIAVNNADGSLDFSKADAKISQYDLNAIEAACQLKQQAVEAQVTALSVGGKALTNAKGRKDVLSRGPDELIVVIDDQFEQALPQQTASVLAAAAQKAGFDLILCGDGSSDLYAQQVGLLVGEILNIPAVNGVSKIISLTADTLTVERELEDETETLSIPLPAVVAVSTDINSPQIPSMKAILGAAKKPVQVWSAADIGFNAEAAWSEQQVAAPKQRERQRIVIEGDGEEQIAAFAENLRKVI.

Belongs to the ETF beta-subunit/FixA family. In terms of assembly, heterodimer of FixA and FixB.

The protein operates within amine and polyamine metabolism; carnitine metabolism. Its function is as follows. Required for anaerobic carnitine reduction. May bring reductant to CaiA. The polypeptide is Protein FixA (Escherichia coli O81 (strain ED1a)).